Consider the following 435-residue polypeptide: MASLQALRGTRDILPPETQVWQWIEQTAREILGRAAVQEVRTPIFEQTALFERGIGEATDVVGKEMYSFRDRGDRSLTLRPEGTAGTVRAYIEHGLASQGGVQRLWYTGPMFRYERPQAGRQRQFHQLGLELLGTADARADAEAIALATQILQALGLKNLRLDLNSVGDASDRAAYRQALVDYLTPYAADLDPDSRDRLERNPLRILDSKDERTQAIVAEAPSLHDYLSERSRQLFEQVQQLLTHLGIDYRLEPKLVRGLDYYTHTAFEIISSDLGAQATVCGGGRYDGLVSQLGGPETPAVGWAMGLERLVLLLQQGQAVPPATLDFYLVSRGAIAEGQALILAQKLRSAGFGVELDLSGSAFGKQFKRADRSGAIACLVLGDAEAEQGQVNLKWLQSGEQQTLDQSELLQDSDHWRSRLQAARTVSPVEVAPL.

This sequence belongs to the class-II aminoacyl-tRNA synthetase family. Homodimer.

It is found in the cytoplasm. The catalysed reaction is tRNA(His) + L-histidine + ATP = L-histidyl-tRNA(His) + AMP + diphosphate + H(+). This Synechococcus elongatus (strain ATCC 33912 / PCC 7942 / FACHB-805) (Anacystis nidulans R2) protein is Histidine--tRNA ligase.